A 178-amino-acid chain; its full sequence is MEQFHGTTIVSVRRGDKVALGGDGQVTLGNIVMKGGARKVRRIYNNQVLVGFAGGTADAFSLLDRFEAKLEKHQGNLTRAAVELAKDWRTDRMLRRLEAMLITADANTTLVITGNGDVLDPEGGICAIGSGGAYAQAAARALAENTELSPREIVEKSLEIAGDMCIYTNHNRVIETIE.

Thr7 is an active-site residue. Residues Gly162, Cys165, and Thr168 each coordinate Na(+).

This sequence belongs to the peptidase T1B family. HslV subfamily. A double ring-shaped homohexamer of HslV is capped on each side by a ring-shaped HslU homohexamer. The assembly of the HslU/HslV complex is dependent on binding of ATP.

Its subcellular location is the cytoplasm. It carries out the reaction ATP-dependent cleavage of peptide bonds with broad specificity.. Its activity is regulated as follows. Allosterically activated by HslU binding. Protease subunit of a proteasome-like degradation complex believed to be a general protein degrading machinery. The chain is ATP-dependent protease subunit HslV from Burkholderia multivorans (strain ATCC 17616 / 249).